The primary structure comprises 438 residues: Phosphoribosylamine--glycine ligase (438 aa).

Residues 107-319 (RKLFEDYDIP…LAKISKQIVD (213 aa)) form the ATP-grasp domain. 134–197 (IDNFDEPVVV…EELLLGEEYT (64 aa)) contacts ATP. Mg(2+) is bound by residues Q277, E289, and N291. Mn(2+) contacts are provided by Q277, E289, and N291.

The protein belongs to the GARS family. The cofactor is Mg(2+). Mn(2+) serves as cofactor.

It carries out the reaction 5-phospho-beta-D-ribosylamine + glycine + ATP = N(1)-(5-phospho-beta-D-ribosyl)glycinamide + ADP + phosphate + H(+). It participates in purine metabolism; IMP biosynthesis via de novo pathway; N(1)-(5-phospho-D-ribosyl)glycinamide from 5-phospho-alpha-D-ribose 1-diphosphate: step 2/2. The chain is Phosphoribosylamine--glycine ligase from Methanosphaera stadtmanae (strain ATCC 43021 / DSM 3091 / JCM 11832 / MCB-3).